A 318-amino-acid chain; its full sequence is Protein LplB (318 aa).

The next 6 membrane-spanning stretches (helical) occupy residues 35–55, 94–114, 130–150, 182–202, 236–256, and 289–309; these read LIPGLLYFLIFKYLPMWGVLI, LMLASLDLLFAFPAPLILALL, FIYVPHFVSWTIVVSITFVFF, IVMQSIWKETGWGTILFLAAL, IIVLLILRIGSFLNLGFEQVY, and AVGLFKSVVGIILIFGANYIA. Residues 90–305 enclose the ABC transmembrane type-1 domain; it reads LRNTLMLASL…VVGIILIFGA (216 aa).

Belongs to the binding-protein-dependent transport system permease family. MalFG subfamily.

It is found in the cell membrane. The polypeptide is Protein LplB (lplB) (Bacillus subtilis (strain 168)).